A 270-amino-acid polypeptide reads, in one-letter code: uncharacterized protein (270 aa).

Over residues 22–31 the composition is skewed to basic and acidic residues; that stretch reads EAPQRTEASR. The disordered stretch occupies residues 22–42; that stretch reads EAPQRTEASRTHPSPFLALPG.

This is an uncharacterized protein from Homo sapiens (Human).